A 522-amino-acid polypeptide reads, in one-letter code: F-box only protein 7 (522 aa).

Disordered regions lie at residues 1-20 and 85-128; these read MKLR…PESE and PNLP…HGQV. The tract at residues 1 to 88 is ubiquitin-like; the sequence is MKLRVRLQKR…EDEMPAPNLP (88 aa). The segment covering 87 to 114 has biased composition (polar residues); that stretch reads LPSSTDSEHSSLQNNDQPPLAATSSQAN. The segment at 92–129 is important for interaction with PINK1; that stretch reads DSEHSSLQNNDQPPLAATSSQANIPDEQGSDSSHGQVT. An important for interaction with CDK6 region spans residues 129–169; sequence TQYDAWTDDSMEGPSHSAEAVSIQDAMSVEEASGFHPLEPM. Residues 180–324 are important for dimerization and interaction with PSMF1; that stretch reads PHSLEALYQS…PLLAFTRQVL (145 aa). The region spanning 329 to 375 is the F-box domain; it reads VFGLVVLPLELKLRIFRLLDVHSVLALSAVCHDLLIASNDPLLWRCL. The segment at 381-522 is important for interaction with CDK6; the sequence is RDSTIRGPDT…RSADNRLPYL (142 aa). Residues R431 and R451 each carry the omega-N-methylarginine modification. The segment at 459–522 is disordered; the sequence is DPVTSLIPRP…RSADNRLPYL (64 aa). Residues 481 to 484 carry the RFDP motif motif; the sequence is RFDP. An Asymmetric dimethylarginine modification is found at R518.

Part of the SCF (SKP1-CUL1-F-box) E3 ubiquitin-protein ligase complex SCF(FBXO7) formed of CUL1, SKP1, RBX1 and FBXO7. Interacts via its C-terminal proline-rich region with DLGAP5. Interacts with BIRC2. Interacts with CDK6 and promotes its interaction with D-type cyclin. Interacts (via the N-terminal Ubl domain) with PRKN. Interacts (via N-terminal region) with PINK1. Interacts with PSMF1.

It localises to the cytoplasm. The protein localises to the nucleus. The protein resides in the mitochondrion. Its subcellular location is the cytosol. It functions in the pathway protein modification; protein ubiquitination. Substrate recognition component of a SCF (SKP1-CUL1-F-box protein) E3 ubiquitin-protein ligase complex which mediates the ubiquitination and subsequent proteasomal degradation of target proteins and plays a role in several biological processes such as cell cycle, cell proliferation, or maintenance of chromosome stability. Recognizes and ubiquitinates BIRC2 and the cell cycle regulator DLGAP5. Plays a role downstream of PINK1 in the clearance of damaged mitochondria via selective autophagy (mitophagy) by targeting PRKN to dysfunctional depolarized mitochondria. Promotes MFN1 ubiquitination. Mediates the ubiquitination and proteasomal degradation of UXT isoform 2, thereby impairing the NF-kappa-B signaling pathway. Inhibits NF-kappa-B pathway also by promoting the ubiquitinatioin of TRAF2. Affects the assembly state and activity of the proteasome in the cells including neurons by ubiquitinating the proteasomal subunit PSMA2 via 'Lys-63'-linked polyubiquitin chains. Promotes 'Lys-48'-linked polyubiquitination SIRT7, leading to the hydrogen peroxide-induced cell death. The sequence is that of F-box only protein 7 (Fbxo7) from Rattus norvegicus (Rat).